Here is a 673-residue protein sequence, read N- to C-terminus: UvrABC system protein C (673 aa).

The GIY-YIG domain occupies 16 to 95 (VEPGVYKFRD…IKEFDPRFNV (80 aa)). Positions 208–243 (DKMVRELERRMHAAAEDLDFETAARLRDDVQALRRA) constitute a UVR domain. The disordered stretch occupies residues 488–526 (RDEAERDELDGTAAGAPLVDDDETPTSRPGIDPTTGRPR).

It belongs to the UvrC family. Interacts with UvrB in an incision complex.

The protein resides in the cytoplasm. In terms of biological role, the UvrABC repair system catalyzes the recognition and processing of DNA lesions. UvrC both incises the 5' and 3' sides of the lesion. The N-terminal half is responsible for the 3' incision and the C-terminal half is responsible for the 5' incision. In Nocardia farcinica (strain IFM 10152), this protein is UvrABC system protein C.